The sequence spans 446 residues: DDB1- and CUL4-associated factor 12 (446 aa).

Positions 1 to 12 are enriched in basic residues; it reads MTRRAVSRKRRA. The disordered stretch occupies residues 1–33; it reads MTRRAVSRKRRAAPGTGPGEQSDWDHSAHKRKR. WD repeat units follow at residues 132 to 173, 177 to 215, 245 to 284, and 333 to 370; these read SHQS…PVCV, GHND…LSKS, PVNC…AKLL, and EQGS…FLED.

This sequence belongs to the WD repeat DCAF12 family. As to quaternary structure, component of the DCX(DCAF12) E3 ubiquitin ligase complex, at least composed of cul4 (cul4a or cul4b), ddb1, dcaf12 and rbx1.

It is found in the cytoplasm. The protein resides in the cytoskeleton. Its subcellular location is the microtubule organizing center. The protein localises to the centrosome. It localises to the nucleus. It functions in the pathway protein modification; protein ubiquitination. Its function is as follows. Substrate-recognition component of a DCX (DDB1-CUL4-X-box) E3 ubiquitin-protein ligase complex of the DesCEND (destruction via C-end degrons) pathway, which recognizes a C-degron located at the extreme C terminus of target proteins, leading to their ubiquitination and degradation. The C-degron recognized by the DesCEND pathway is usually a motif of less than ten residues and can be present in full-length proteins, truncated proteins or proteolytically cleaved forms. The DCX(DCAF12) complex specifically recognizes proteins with a diglutamate (Glu-Glu) at the C-terminus leading to their ubiquitination and degradation. Also directly recognizes the C-terminal glutamate-leucine (Glu-Leu) degron as an alternative degron in proteins leading to their ubiquitination and degradation. The protein is DDB1- and CUL4-associated factor 12 of Xenopus tropicalis (Western clawed frog).